Here is a 737-residue protein sequence, read N- to C-terminus: Angiotensin-converting enzyme-like protein Ace3 (737 aa).

The signal sequence occupies residues 1–23 (MNLPWALLLVLLSHRQLLPWLRT). Over 24–639 (VGETSLNDFY…TDTEPEQAYL (616 aa)) the chain is Extracellular. The Peptidase M2 domain occupies 32-611 (FYSEAQAKLF…VKQGDTLGWP (580 aa)). A disulfide bridge links cysteine 146 with cysteine 152. Residues arginine 180 and tyrosine 218 each contribute to the chloride site. Cysteine 346 and cysteine 364 are oxidised to a cystine. Residues histidine 377 and histidine 381 each contribute to the Zn(2+) site. Asparagine 390 is a glycosylation site (N-linked (GlcNAc...) asparagine). Glutamate 405 is a Zn(2+) binding site. The chloride site is built by tryptophan 479, arginine 483, and arginine 516. A disulfide bridge links cysteine 532 with cysteine 544. Residues 640–660 (GQWVLLSMSFFMLVLILALGF) traverse the membrane as a helical segment. At 661–700 (RLHYLEKQLLDEDTMILKTLPYSYFLGIAMEPHQAARKQW) the chain is on the cytoplasmic side. The helical transmembrane segment at 701–721 (LLLGLCCILMLCCIGLLIRIV) threads the bilayer. Residues 722-737 (TQNTENTPWMKNEGQS) are Extracellular-facing.

It belongs to the peptidase M2 family. In terms of assembly, interacts with IZUMO1. Zn(2+) serves as cofactor. In terms of tissue distribution, expressed in sperm and testis (at protein level). Expressed in heart and testis. Not detected in kidney, lung, liver, brain, ovary, spleen and thymus.

The protein localises to the cytoplasmic vesicle. Its subcellular location is the secretory vesicle. It is found in the acrosome membrane. In Mus musculus (Mouse), this protein is Angiotensin-converting enzyme-like protein Ace3.